An 882-amino-acid polypeptide reads, in one-letter code: MGMAMRCVLVLFSVSPVLLLFNFEMLEVALHLASREKELDTAAVTPSASLSFLSRFRIMLGMNHHRSRGRRHKRYSEAPAPAPAPVPAHQARSEAPAPLVHVPRKGMPSTHRSHIAPARSPVHKVKDGGHTKIPRSAIVALGVVGLCLVVLGVVIAAFSVRRSRKFKKVCTKAFKPFRHGSRDQRSPAATRKVSSHPSPDPLTLSSIVQYQQNLPNLKQSSESKSLSIQSTIPMGTELIVSDHAVINNSQSDEVESFHSIPCSDLSAGSITELPQQICDRRAIMNRSEYFLQTHDSPSDSSYQSLSPDCTSRLSPKDQTFTASSHLSLRSKTCPEKSDGENAEINCHDGLEITCISGSMEHQEAPIEERARINFRNPPSQHIFPPSYRTDTSQSKINIAFTMTNSKVESSSKESSRIETSSSMGIPKPAPPPPPQKNPPPNLKGQCYGQPPPPPPLPLQIQVGKDGSPLPRLKPLHWDKVRAAPNRSMVWNDIRSSSFEFEFDEQMIKSLFAYNLQGSMKDEEAMNKTASTTKHVIEHHRLQNTTILLKTLNANTSQVCNSVIQGNGLSVQQLEALVKMKPTKEEEEKLLNYDGDINMLDPAENFVKVLLTIPMAFPRMEVMLYKENFDDEVAHIKMSFAMIEGACTELKSSKLFLRLLEAVLKTGNRMNVGTLRGGASAFKLDALLKLADIRGTDGKTTLLHFVVKEMARSKGLKALEKLNETPSSCHDTPTEREEYSSMGTEFVSELSNELGNVKKVASIDLDTLRNSISNLSCGLAQLRNLVEKDLASDDKNNNFLQCMKSFLNHAENTMQGLKADEAQVLLNVRELTEYYHGEVSKDESNLLQIFIIVKDFLGLLDKVCREMRGTKHNQTLNLVLPLK.

The first 19 residues, 1–19 (MGMAMRCVLVLFSVSPVLL), serve as a signal peptide directing secretion. A disordered region spans residues 67–92 (SRGRRHKRYSEAPAPAPAPVPAHQAR). The helical transmembrane segment at 138-158 (IVALGVVGLCLVVLGVVIAAF) threads the bilayer. Disordered regions lie at residues 178-202 (RHGSRDQRSPAATRKVSSHPSPDPL), 293-316 (THDSPSDSSYQSLSPDCTSRLSPK), and 401-471 (TMTN…PLPR). The span at 298–308 (SDSSYQSLSPD) shows a compositional bias: low complexity. The segment covering 427–441 (KPAPPPPPQKNPPPN) has biased composition (pro residues). An FH2 domain is found at 462 to 882 (VGKDGSPLPR…QTLNLVLPLK (421 aa)).

This sequence belongs to the formin-like family. Class-I subfamily.

It localises to the membrane. This chain is Formin-like protein 9 (FH9), found in Oryza sativa subsp. japonica (Rice).